The following is a 904-amino-acid chain: Putative pentatricopeptide repeat-containing protein At1g19290 (904 aa).

PPR repeat units lie at residues 154–188, 189–223, 224–254, 260–294, 295–329, 330–364, 365–399, 400–434, 435–469, 470–504, 505–539, 540–574, 575–609, 610–644, 645–679, 718–753, 754–788, 789–823, and 824–858; these read SPTV…GRIP, SLLS…EVSP, DVFT…TESS, NVVT…GVSR, NVVT…KLVA, DQHM…GVRT, NTTI…SLKP, DHHT…EVVP, TVMT…GVNA, DEIS…GLLT, DTIT…RCKP, AVQT…GIFP, TIEM…GLTP, TVAT…GITL, NVNI…DLLL, NNIV…RFIP, DEYT…GIIP, NIVT…GITP, and NAIT…GLVR.

This sequence belongs to the PPR family. P subfamily.

The chain is Putative pentatricopeptide repeat-containing protein At1g19290 from Arabidopsis thaliana (Mouse-ear cress).